A 385-amino-acid chain; its full sequence is Lipid-A-disaccharide synthase 2 (385 aa).

Belongs to the LpxB family.

It catalyses the reaction a lipid X + a UDP-2-N,3-O-bis[(3R)-3-hydroxyacyl]-alpha-D-glucosamine = a lipid A disaccharide + UDP + H(+). Its pathway is bacterial outer membrane biogenesis; LPS lipid A biosynthesis. Condensation of UDP-2,3-diacylglucosamine and 2,3-diacylglucosamine-1-phosphate to form lipid A disaccharide, a precursor of lipid A, a phosphorylated glycolipid that anchors the lipopolysaccharide to the outer membrane of the cell. This chain is Lipid-A-disaccharide synthase 2, found in Legionella pneumophila subsp. pneumophila (strain Philadelphia 1 / ATCC 33152 / DSM 7513).